A 326-amino-acid chain; its full sequence is Fructose-1,6-bisphosphatase class 1 (326 aa).

Belongs to the FBPase class 1 family. As to quaternary structure, homotetramer.

The protein localises to the cytoplasm. It carries out the reaction beta-D-fructose 1,6-bisphosphate + H2O = beta-D-fructose 6-phosphate + phosphate. It functions in the pathway carbohydrate biosynthesis; gluconeogenesis. The chain is Fructose-1,6-bisphosphatase class 1 from Methylobacterium sp. (strain 4-46).